The sequence spans 330 residues: UDP-glucose 4-epimerase (330 aa).

NAD(+) is bound by residues 11–12 (YI), 31–36 (DALYTG), 51–52 (DI), 73–77 (FAAYS), asparagine 92, serine 117, tyrosine 141, lysine 145, and phenylalanine 169. Serine 117 and tyrosine 141 together coordinate substrate. Tyrosine 141 (proton acceptor) is an active-site residue. Substrate is bound by residues asparagine 170, 189–190 (HL), 206–208 (TIF), arginine 221, and 282–285 (RGGD).

This sequence belongs to the NAD(P)-dependent epimerase/dehydratase family. As to quaternary structure, homodimer. NAD(+) serves as cofactor.

It catalyses the reaction UDP-alpha-D-glucose = UDP-alpha-D-galactose. It functions in the pathway carbohydrate metabolism; galactose metabolism. Functionally, involved in the metabolism of galactose. Catalyzes the conversion of UDP-galactose (UDP-Gal) to UDP-glucose (UDP-Glc) through a mechanism involving the transient reduction of NAD. It also could be involved in preparation of carbohydrate residues for incorporation into complex polymers, such as exopolysaccharides. In Lactobacillus helveticus (Lactobacillus suntoryeus), this protein is UDP-glucose 4-epimerase (galE).